The following is a 530-amino-acid chain: Bifunctional purine biosynthesis protein PurH (530 aa).

The MGS-like domain occupies Met1–Val148.

Belongs to the PurH family.

The enzyme catalyses (6R)-10-formyltetrahydrofolate + 5-amino-1-(5-phospho-beta-D-ribosyl)imidazole-4-carboxamide = 5-formamido-1-(5-phospho-D-ribosyl)imidazole-4-carboxamide + (6S)-5,6,7,8-tetrahydrofolate. It catalyses the reaction IMP + H2O = 5-formamido-1-(5-phospho-D-ribosyl)imidazole-4-carboxamide. The protein operates within purine metabolism; IMP biosynthesis via de novo pathway; 5-formamido-1-(5-phospho-D-ribosyl)imidazole-4-carboxamide from 5-amino-1-(5-phospho-D-ribosyl)imidazole-4-carboxamide (10-formyl THF route): step 1/1. Its pathway is purine metabolism; IMP biosynthesis via de novo pathway; IMP from 5-formamido-1-(5-phospho-D-ribosyl)imidazole-4-carboxamide: step 1/1. The polypeptide is Bifunctional purine biosynthesis protein PurH (Vibrio cholerae serotype O1 (strain ATCC 39541 / Classical Ogawa 395 / O395)).